The following is a 167-amino-acid chain: Peptide deformylase (167 aa).

The Fe cation site is built by Cys-91 and His-133. The active site involves Glu-134. Position 137 (His-137) interacts with Fe cation.

It belongs to the polypeptide deformylase family. Requires Fe(2+) as cofactor.

The enzyme catalyses N-terminal N-formyl-L-methionyl-[peptide] + H2O = N-terminal L-methionyl-[peptide] + formate. Removes the formyl group from the N-terminal Met of newly synthesized proteins. Requires at least a dipeptide for an efficient rate of reaction. N-terminal L-methionine is a prerequisite for activity but the enzyme has broad specificity at other positions. In Neisseria meningitidis serogroup C (strain 053442), this protein is Peptide deformylase.